The following is a 206-amino-acid chain: FMN-dependent NADH:quinone oxidoreductase (206 aa).

Residues 15 to 17 (SVS), 94 to 97 (MYNF), and 138 to 141 (TRGG) contribute to the FMN site.

This sequence belongs to the azoreductase type 1 family. As to quaternary structure, homodimer. FMN serves as cofactor.

The enzyme catalyses 2 a quinone + NADH + H(+) = 2 a 1,4-benzosemiquinone + NAD(+). It catalyses the reaction N,N-dimethyl-1,4-phenylenediamine + anthranilate + 2 NAD(+) = 2-(4-dimethylaminophenyl)diazenylbenzoate + 2 NADH + 2 H(+). Functionally, quinone reductase that provides resistance to thiol-specific stress caused by electrophilic quinones. Also exhibits azoreductase activity. Catalyzes the reductive cleavage of the azo bond in aromatic azo compounds to the corresponding amines. The protein is FMN-dependent NADH:quinone oxidoreductase of Rhizobium meliloti (strain 1021) (Ensifer meliloti).